The chain runs to 224 residues: Putative tyrosine-protein phosphatase OCA6 (224 aa).

The residue at position 2 (T2) is a Phosphothreonine. A Tyrosine-protein phosphatase domain is found at 8–170 (QFSTVQPNLY…FNSEIEVDDL (163 aa)). C114 functions as the Phosphocysteine intermediate in the catalytic mechanism.

Belongs to the protein-tyrosine phosphatase family.

The protein resides in the cytoplasm. It catalyses the reaction O-phospho-L-tyrosyl-[protein] + H2O = L-tyrosyl-[protein] + phosphate. In terms of biological role, required for replication of Brome mosaic virus (BMV). This Saccharomyces cerevisiae (strain ATCC 204508 / S288c) (Baker's yeast) protein is Putative tyrosine-protein phosphatase OCA6 (OCA6).